The primary structure comprises 899 residues: Valine--tRNA ligase (899 aa).

The 'HIGH' region motif lies at 60 to 70 (PNVTGVLHMGH). Positions 539–543 (KMSKS) match the 'KMSKS' region motif. Lys-542 is an ATP binding site. Positions 827–898 (AGLIDLDEEQ…KQGLEKLAAL (72 aa)) form a coiled coil.

Belongs to the class-I aminoacyl-tRNA synthetase family. ValS type 1 subfamily. As to quaternary structure, monomer.

Its subcellular location is the cytoplasm. It carries out the reaction tRNA(Val) + L-valine + ATP = L-valyl-tRNA(Val) + AMP + diphosphate. Catalyzes the attachment of valine to tRNA(Val). As ValRS can inadvertently accommodate and process structurally similar amino acids such as threonine, to avoid such errors, it has a 'posttransfer' editing activity that hydrolyzes mischarged Thr-tRNA(Val) in a tRNA-dependent manner. The chain is Valine--tRNA ligase from Syntrophotalea carbinolica (strain DSM 2380 / NBRC 103641 / GraBd1) (Pelobacter carbinolicus).